Here is a 413-residue protein sequence, read N- to C-terminus: NADH-quinone oxidoreductase subunit D (413 aa).

Belongs to the complex I 49 kDa subunit family. NDH-1 is composed of 14 different subunits. Subunits NuoB, C, D, E, F, and G constitute the peripheral sector of the complex.

The protein localises to the cell inner membrane. The enzyme catalyses a quinone + NADH + 5 H(+)(in) = a quinol + NAD(+) + 4 H(+)(out). In terms of biological role, NDH-1 shuttles electrons from NADH, via FMN and iron-sulfur (Fe-S) centers, to quinones in the respiratory chain. The immediate electron acceptor for the enzyme in this species is believed to be ubiquinone. Couples the redox reaction to proton translocation (for every two electrons transferred, four hydrogen ions are translocated across the cytoplasmic membrane), and thus conserves the redox energy in a proton gradient. This chain is NADH-quinone oxidoreductase subunit D, found in Rhodobacter capsulatus (Rhodopseudomonas capsulata).